Here is a 300-residue protein sequence, read N- to C-terminus: Ribosomal RNA small subunit methyltransferase H (300 aa).

S-adenosyl-L-methionine is bound by residues 38-40 (GGH), Glu-55, Ile-85, Asp-102, and His-109.

This sequence belongs to the methyltransferase superfamily. RsmH family.

The protein localises to the cytoplasm. It catalyses the reaction cytidine(1402) in 16S rRNA + S-adenosyl-L-methionine = N(4)-methylcytidine(1402) in 16S rRNA + S-adenosyl-L-homocysteine + H(+). Specifically methylates the N4 position of cytidine in position 1402 (C1402) of 16S rRNA. This is Ribosomal RNA small subunit methyltransferase H from Brachyspira hyodysenteriae (strain ATCC 49526 / WA1).